We begin with the raw amino-acid sequence, 360 residues long: Phenylalanine--tRNA ligase alpha subunit (360 aa).

Glu-260 contacts Mg(2+).

This sequence belongs to the class-II aminoacyl-tRNA synthetase family. Phe-tRNA synthetase alpha subunit type 1 subfamily. Tetramer of two alpha and two beta subunits. The cofactor is Mg(2+).

It is found in the cytoplasm. It carries out the reaction tRNA(Phe) + L-phenylalanine + ATP = L-phenylalanyl-tRNA(Phe) + AMP + diphosphate + H(+). The sequence is that of Phenylalanine--tRNA ligase alpha subunit from Methylobacterium nodulans (strain LMG 21967 / CNCM I-2342 / ORS 2060).